We begin with the raw amino-acid sequence, 64 residues long: Small cysteine-rich protein (64 aa).

Residues 1–17 (FVCVQARQIDPEQILRT) form the signal peptide. Residues 18 to 19 (PE) constitute a propeptide that is removed on maturation.

In terms of processing, contains 4 disulfide bonds.

Its subcellular location is the secreted. It localises to the nematocyst. This Anemonia viridis (Snakelocks anemone) protein is Small cysteine-rich protein.